A 348-amino-acid polypeptide reads, in one-letter code: Rhodopsin (348 aa).

At methionine 1 the chain carries N-acetylmethionine. Topologically, residues 1–36 are extracellular; the sequence is MNGTEGPNFYVPFSNKTGVVRSPFEYPQYYLAEPWQ. 2 N-linked (GlcNAc...) asparagine glycosylation sites follow: asparagine 2 and asparagine 15. A helical membrane pass occupies residues 37-61; that stretch reads FSMLAAYMFLLIVLGFPINFLTLYV. Residues 62–73 lie on the Cytoplasmic side of the membrane; it reads TVQHKKLRTPLN. A helical transmembrane segment spans residues 74-96; the sequence is YILLNLAVADLFMVFGGFTTTLY. The Extracellular portion of the chain corresponds to 97–110; that stretch reads TSLHGYFVFGPTGC. Cysteine 110 and cysteine 187 are disulfide-bonded. The helical transmembrane segment at 111 to 133 threads the bilayer; the sequence is NLEGFFATLGGEIALWSLVVLAI. A 'Ionic lock' involved in activated form stabilization motif is present at residues 134 to 136; it reads ERY. Topologically, residues 134–152 are cytoplasmic; that stretch reads ERYVVVCKPMSNFRFGENH. Residues 153 to 173 form a helical membrane-spanning segment; the sequence is AIMGVGLTWVMALACAAPPLV. Topologically, residues 174–202 are extracellular; it reads GWSRYIPEGMQCSCGIDYYTLKPEVNNES. Zn(2+) is bound at residue glutamate 201. Residues 203 to 224 form a helical membrane-spanning segment; that stretch reads FVIYMFVVHFTIPMIVIFFCYG. The Cytoplasmic segment spans residues 225 to 252; that stretch reads QLVFTVKEAAAQQQESATTQKAEKEVTR. The helical transmembrane segment at 253–274 threads the bilayer; the sequence is MVIIMVIAFLICWVPYASVAFY. Residues 275–286 lie on the Extracellular side of the membrane; sequence IFTHQGFNFGPI. Glutamine 279 contacts Zn(2+). Residues 287–308 form a helical membrane-spanning segment; the sequence is FMTLPAFFAKAAAIYNPVIYIM. Residue lysine 296 is modified to N6-(retinylidene)lysine. Residues 309–348 are Cytoplasmic-facing; that stretch reads MNKQFRTCMITTLCCGKNPLGDDEVSASASKTETSQVAPA. Residues cysteine 322 and cysteine 323 are each lipidated (S-palmitoyl cysteine). Residues 330–348 are interaction with SAG; the sequence is DDEVSASASKTETSQVAPA. Phosphoserine is present on residues serine 334 and serine 338. A phosphothreonine mark is found at threonine 340 and threonine 342. Serine 343 bears the Phosphoserine mark.

Belongs to the G-protein coupled receptor 1 family. Opsin subfamily. In terms of assembly, homodimer. Interacts (phosphorylated form) with SAG. Interacts with GNAT1. Interacts with GNAT3. SAG and G-proteins compete for a common binding site. Interacts with GRK1. Interacts with PRCD; the interaction promotes PRCD stability. Forms a complex with ASAP1 and ARF4. Forms a complex with ASAP1, RAB11A, Rabin8/RAB3IP, ARF4 and RAB11FIP3; the complex regulates Golgi-to-cilia rhodopsin/RHO transport in photoreceptors. Phosphorylated on some or all of the serine and threonine residues present in the C-terminal region. In terms of processing, contains one covalently linked retinal chromophore. Upon light absorption, the covalently bound 11-cis-retinal is converted to all-trans-retinal. After hydrolysis of the Schiff base and release of the covalently bound all-trans-retinal, active rhodopsin is regenerated by binding of a fresh molecule of 11-cis-retinal.

The protein resides in the membrane. Its subcellular location is the cell projection. The protein localises to the cilium. It is found in the photoreceptor outer segment. Photoreceptor required for image-forming vision at low light intensity. Required for photoreceptor cell viability after birth. Light-induced isomerization of 11-cis to all-trans retinal triggers a conformational change that activates signaling via G-proteins. Subsequent receptor phosphorylation mediates displacement of the bound G-protein alpha subunit by the arrestin SAG and terminates signaling. This chain is Rhodopsin (RHO), found in Pagophilus groenlandicus (Harp seal).